We begin with the raw amino-acid sequence, 255 residues long: Hydroxyacylglutathione hydrolase (255 aa).

Positions 53, 55, 57, 58, 110, 127, and 165 each coordinate Zn(2+).

This sequence belongs to the metallo-beta-lactamase superfamily. Glyoxalase II family. Monomer. It depends on Zn(2+) as a cofactor.

The enzyme catalyses an S-(2-hydroxyacyl)glutathione + H2O = a 2-hydroxy carboxylate + glutathione + H(+). The protein operates within secondary metabolite metabolism; methylglyoxal degradation; (R)-lactate from methylglyoxal: step 2/2. Its function is as follows. Thiolesterase that catalyzes the hydrolysis of S-D-lactoyl-glutathione to form glutathione and D-lactic acid. The protein is Hydroxyacylglutathione hydrolase of Xanthomonas axonopodis pv. citri (strain 306).